Here is a 341-residue protein sequence, read N- to C-terminus: Ferrochelatase (341 aa).

2 residues coordinate Fe cation: His-189 and Glu-293.

It belongs to the ferrochelatase family.

It localises to the cytoplasm. The catalysed reaction is heme b + 2 H(+) = protoporphyrin IX + Fe(2+). The protein operates within porphyrin-containing compound metabolism; protoheme biosynthesis; protoheme from protoporphyrin-IX: step 1/1. Catalyzes the ferrous insertion into protoporphyrin IX. The protein is Ferrochelatase of Stutzerimonas stutzeri (strain A1501) (Pseudomonas stutzeri).